Here is a 365-residue protein sequence, read N- to C-terminus: Mitogen-activated protein kinase 13 (365 aa).

The Protein kinase domain occupies 25-308 (YVSPTHVGSG…AAQALTHPFF (284 aa)). Residue 31 to 39 (VGSGAYGSV) participates in ATP binding. At S47 the chain carries Phosphoserine. K54 contributes to the ATP binding site. Residue D150 is the Proton acceptor of the active site. T180 bears the Phosphothreonine; by MAP2K3, MAP2K4, MAP2K6 and MAP2K7 mark. A TXY motif is present at residues 180–182 (TGY). Y182 carries the phosphotyrosine; by MAP2K3, MAP2K4, MAP2K6 and MAP2K7 modification. S350 bears the Phosphoserine mark.

Belongs to the protein kinase superfamily. CMGC Ser/Thr protein kinase family. MAP kinase subfamily. Interacts with MAPK8IP2. Mg(2+) serves as cofactor. In terms of processing, dually phosphorylated on Thr-180 and Tyr-182 by MAP2K3/MKK3, MAP2K4/MKK4, MAP2K6/MKK6 and MAP2K7/MKK7, which activates the enzyme. Dephosphorylated by dual specificity phosphatase DUSP1. As to expression, expressed in testes, pancreas, small intestine, lung and kidney. Abundant in macrophages, also present in neutrophils, CD4+ T-cells, and endothelial cells.

It catalyses the reaction L-seryl-[protein] + ATP = O-phospho-L-seryl-[protein] + ADP + H(+). It carries out the reaction L-threonyl-[protein] + ATP = O-phospho-L-threonyl-[protein] + ADP + H(+). Its activity is regulated as follows. Activated by phosphorylation on threonine and tyrosine by dual specificity kinases, MAP2K3/MKK3, MAP2K6/MKK6, MAP2K4/MKK4 and MAP2K7/MKK7. Activation by ultraviolet radiation, hyperosmotic shock, anisomycin or by TNF-alpha is mediated by MAP2K3/MKK3. Inhibited by dual specificity phosphatase DUSP1. Its function is as follows. Serine/threonine kinase which acts as an essential component of the MAP kinase signal transduction pathway. MAPK13 is one of the four p38 MAPKs which play an important role in the cascades of cellular responses evoked by extracellular stimuli such as pro-inflammatory cytokines or physical stress leading to direct activation of transcription factors such as ELK1 and ATF2. Accordingly, p38 MAPKs phosphorylate a broad range of proteins and it has been estimated that they may have approximately 200 to 300 substrates each. MAPK13 is one of the less studied p38 MAPK isoforms. Some of the targets are downstream kinases such as MAPKAPK2, which are activated through phosphorylation and further phosphorylate additional targets. Plays a role in the regulation of protein translation by phosphorylating and inactivating EEF2K. Involved in cytoskeletal remodeling through phosphorylation of MAPT and STMN1. Mediates UV irradiation induced up-regulation of the gene expression of CXCL14. Plays an important role in the regulation of epidermal keratinocyte differentiation, apoptosis and skin tumor development. Phosphorylates the transcriptional activator MYB in response to stress which leads to rapid MYB degradation via a proteasome-dependent pathway. MAPK13 also phosphorylates and down-regulates PRKD1 during regulation of insulin secretion in pancreatic beta cells. The chain is Mitogen-activated protein kinase 13 (MAPK13) from Homo sapiens (Human).